The chain runs to 392 residues: Zinc finger protein ham-2 (392 aa).

2 C2H2-type zinc fingers span residues 16–39 (FPCS…MQAH) and 43–66 (YTCT…YRVH). Residues 72–95 (FMCRCCNWAFPDKTSLHIHMQSML) form a C2H2-type 3; degenerate zinc finger. Disordered stretches follow at residues 106–130 (LAKS…PFSP) and 278–303 (HISH…HSGE). The segment covering 112-123 (VVDSTSESGSPR) has biased composition (polar residues). Positions 289 to 303 (SDSHISGGSSSHSGE) are enriched in low complexity.

Its subcellular location is the nucleus. In terms of biological role, probable transcription factor that acts downstream of egl-15, to promote migration of the HSN motor neurons from the tail to the gonad primordium during HSN cell differentiation. The polypeptide is Zinc finger protein ham-2 (Caenorhabditis elegans).